The sequence spans 91 residues: Small ribosomal subunit protein uS19 (91 aa).

The protein belongs to the universal ribosomal protein uS19 family.

Its function is as follows. Protein S19 forms a complex with S13 that binds strongly to the 16S ribosomal RNA. This chain is Small ribosomal subunit protein uS19, found in Shouchella clausii (strain KSM-K16) (Alkalihalobacillus clausii).